Here is a 178-residue protein sequence, read N- to C-terminus: Translation initiation factor IF-3 (178 aa).

This sequence belongs to the IF-3 family. In terms of assembly, monomer.

The protein localises to the cytoplasm. IF-3 binds to the 30S ribosomal subunit and shifts the equilibrium between 70S ribosomes and their 50S and 30S subunits in favor of the free subunits, thus enhancing the availability of 30S subunits on which protein synthesis initiation begins. The sequence is that of Translation initiation factor IF-3 from Ralstonia nicotianae (strain ATCC BAA-1114 / GMI1000) (Ralstonia solanacearum).